Here is a 157-residue protein sequence, read N- to C-terminus: Tripartite terminase subunit 2 (157 aa).

The disordered stretch occupies residues 1 to 69 (MSWAKQRVPF…DGEDGHALPD (69 aa)). Over residues 11–27 (LDDDDGEEENDVQDDVD) the composition is skewed to acidic residues.

It belongs to the herpesviridae TRM2 protein family. Associates with TRM1 and TRM3 to form the tripartite terminase complex.

The protein localises to the host nucleus. Its function is as follows. Component of the molecular motor that translocates viral genomic DNA in empty capsid during DNA packaging. Forms a tripartite terminase complex together with TRM1 and TRM3 in the host cytoplasm. Once the complex reaches the host nucleus, it interacts with the capsid portal vertex. This portal forms a ring in which genomic DNA is translocated into the capsid. The sequence is that of Tripartite terminase subunit 2 from Homo sapiens (Human).